Consider the following 218-residue polypeptide: Thiamine-phosphate synthase (218 aa).

Residues Gln-43–Lys-47 and Asn-78 each bind 4-amino-2-methyl-5-(diphosphooxymethyl)pyrimidine. Mg(2+)-binding residues include Asp-79 and Asp-98. Ser-117 provides a ligand contact to 4-amino-2-methyl-5-(diphosphooxymethyl)pyrimidine. Thr-143–Ser-145 contacts 2-[(2R,5Z)-2-carboxy-4-methylthiazol-5(2H)-ylidene]ethyl phosphate. Residue Lys-146 coordinates 4-amino-2-methyl-5-(diphosphooxymethyl)pyrimidine. 2-[(2R,5Z)-2-carboxy-4-methylthiazol-5(2H)-ylidene]ethyl phosphate-binding positions include Gly-174 and Ile-194–Ser-195.

This sequence belongs to the thiamine-phosphate synthase family. Mg(2+) serves as cofactor.

The catalysed reaction is 2-[(2R,5Z)-2-carboxy-4-methylthiazol-5(2H)-ylidene]ethyl phosphate + 4-amino-2-methyl-5-(diphosphooxymethyl)pyrimidine + 2 H(+) = thiamine phosphate + CO2 + diphosphate. It carries out the reaction 2-(2-carboxy-4-methylthiazol-5-yl)ethyl phosphate + 4-amino-2-methyl-5-(diphosphooxymethyl)pyrimidine + 2 H(+) = thiamine phosphate + CO2 + diphosphate. The enzyme catalyses 4-methyl-5-(2-phosphooxyethyl)-thiazole + 4-amino-2-methyl-5-(diphosphooxymethyl)pyrimidine + H(+) = thiamine phosphate + diphosphate. It functions in the pathway cofactor biosynthesis; thiamine diphosphate biosynthesis; thiamine phosphate from 4-amino-2-methyl-5-diphosphomethylpyrimidine and 4-methyl-5-(2-phosphoethyl)-thiazole: step 1/1. Its function is as follows. Condenses 4-methyl-5-(beta-hydroxyethyl)thiazole monophosphate (THZ-P) and 2-methyl-4-amino-5-hydroxymethyl pyrimidine pyrophosphate (HMP-PP) to form thiamine monophosphate (TMP). The sequence is that of Thiamine-phosphate synthase from Lactococcus lactis subsp. cremoris (strain MG1363).